Here is a 232-residue protein sequence, read N- to C-terminus: uncharacterized protein (232 aa).

The next 5 membrane-spanning stretches (helical) occupy residues 69–91 (LISA…YILF), 104–126 (FLEP…FFAL), 139–161 (FSRF…FFFL), 166–188 (ICFT…AMLS), and 200–219 (FIYS…QLII).

The protein resides in the cell membrane. This is an uncharacterized protein from Bacillus subtilis (strain 168).